The following is a 91-amino-acid chain: Small ribosomal subunit protein uS19 (91 aa).

This sequence belongs to the universal ribosomal protein uS19 family.

Protein S19 forms a complex with S13 that binds strongly to the 16S ribosomal RNA. The chain is Small ribosomal subunit protein uS19 from Azotobacter vinelandii (strain DJ / ATCC BAA-1303).